The following is a 632-amino-acid chain: ATP-dependent DNA helicase RecQ (632 aa).

In terms of domain architecture, Helicase ATP-binding spans 47 to 215 (IDATLMGKDS…LRHLNLQSPH (169 aa)). Residue 60 to 67 (MATGNGKS) coordinates ATP. The DEAH box motif lies at 159-162 (DEAH). The 150-residue stretch at 236-385 (PMEQLCRFVL…IEALKLQAIG (150 aa)) folds into the Helicase C-terminal domain. Zn(2+)-binding residues include Cys-393, Cys-410, Cys-413, and Cys-416. Residues 544–624 (AQYDKDLFAR…QQHKKVLTQH (81 aa)) enclose the HRDC domain.

The protein belongs to the helicase family. RecQ subfamily. Mg(2+) serves as cofactor. Zn(2+) is required as a cofactor.

The enzyme catalyses Couples ATP hydrolysis with the unwinding of duplex DNA by translocating in the 3'-5' direction.. The catalysed reaction is ATP + H2O = ADP + phosphate + H(+). Functionally, an ATP-dependent DNA helicase which unwinds DNA in a 3'-5' direction. Plays a role in recombination. The protein is ATP-dependent DNA helicase RecQ of Pasteurella multocida (strain Pm70).